The chain runs to 1227 residues: Methionine synthase (1227 aa).

Residues 2–325 (SSKVEQLRAQ…QHIAAMSRAV (324 aa)) enclose the Hcy-binding domain. Residues Cys-247, Cys-310, and Cys-311 each coordinate Zn(2+). The region spanning 356-617 (FVNVGERTNV…LPAELRDAVE (262 aa)) is the Pterin-binding domain. Positions 650–744 (QQAEWRSWEV…FIEASKEQGK (95 aa)) constitute a B12-binding N-terminal domain. Residues Glu-694, 756 to 760 (GDVHD), His-759, Ser-804, Thr-808, and Ala-860 each bind methylcob(III)alamin. In terms of domain architecture, B12-binding spans 746-881 (NGKMVIATVK…SDTQRDDFVA (136 aa)). An AdoMet activation domain is found at 897 to 1227 (KKPRTPPVTL…LAPNLGYDAD (331 aa)). Residues Asp-946, Arg-1134, and 1189-1190 (YY) each bind S-adenosyl-L-methionine.

The protein belongs to the vitamin-B12 dependent methionine synthase family. Requires methylcob(III)alamin as cofactor. It depends on Zn(2+) as a cofactor.

It carries out the reaction (6S)-5-methyl-5,6,7,8-tetrahydrofolate + L-homocysteine = (6S)-5,6,7,8-tetrahydrofolate + L-methionine. The protein operates within amino-acid biosynthesis; L-methionine biosynthesis via de novo pathway; L-methionine from L-homocysteine (MetH route): step 1/1. Functionally, catalyzes the transfer of a methyl group from methyl-cobalamin to homocysteine, yielding enzyme-bound cob(I)alamin and methionine. Subsequently, remethylates the cofactor using methyltetrahydrofolate. The protein is Methionine synthase (metH) of Escherichia coli (strain K12).